The primary structure comprises 836 residues: Probable RING finger protein 207 homolog (836 aa).

An RING-type zinc finger spans residues 8–42 (CTICKNDFEEPILFSCQHTTCRKCSNGSPSCKTCS). Residues 68–115 (EEMEQCANCEQITLPMFYCETCQQSLCLACRNVTHQARMFSSHKIISS) form a B box-type 1; atypical zinc finger. Cys73, Cys76, Cys97, and His102 together coordinate Zn(2+). The B box-type 2; degenerate zinc-finger motif lies at 122–164 (YSSSLCKDHNEPYILYCSDVRKLVCIQCFNGRPLEERHSFISI). The stretch at 527 to 557 (QNRIMAIEKEEENRRLNQEAKKKEELAGQSA) forms a coiled coil. Over residues 540-552 (RRLNQEAKKKEEL) the composition is skewed to basic and acidic residues. Residues 540–571 (RRLNQEAKKKEELAGQSAAMKSLKHGKTKRKE) are disordered. Residues 561–571 (SLKHGKTKRKE) show a composition bias toward basic residues.

In Caenorhabditis briggsae, this protein is Probable RING finger protein 207 homolog.